Consider the following 159-residue polypeptide: 2-C-methyl-D-erythritol 2,4-cyclodiphosphate synthase (159 aa).

2 residues coordinate a divalent metal cation: D10 and H12. Residues 10 to 12 (DVH) and 36 to 37 (HS) each bind 4-CDP-2-C-methyl-D-erythritol 2-phosphate. H44 serves as a coordination point for a divalent metal cation. 4-CDP-2-C-methyl-D-erythritol 2-phosphate contacts are provided by residues 58-60 (DIG), 63-67 (FANTD), 134-137 (TTNE), and R144.

It belongs to the IspF family. As to quaternary structure, homotrimer. Requires a divalent metal cation as cofactor.

The enzyme catalyses 4-CDP-2-C-methyl-D-erythritol 2-phosphate = 2-C-methyl-D-erythritol 2,4-cyclic diphosphate + CMP. It functions in the pathway isoprenoid biosynthesis; isopentenyl diphosphate biosynthesis via DXP pathway; isopentenyl diphosphate from 1-deoxy-D-xylulose 5-phosphate: step 4/6. Involved in the biosynthesis of isopentenyl diphosphate (IPP) and dimethylallyl diphosphate (DMAPP), two major building blocks of isoprenoid compounds. Catalyzes the conversion of 4-diphosphocytidyl-2-C-methyl-D-erythritol 2-phosphate (CDP-ME2P) to 2-C-methyl-D-erythritol 2,4-cyclodiphosphate (ME-CPP) with a corresponding release of cytidine 5-monophosphate (CMP). The protein is 2-C-methyl-D-erythritol 2,4-cyclodiphosphate synthase of Cytophaga hutchinsonii (strain ATCC 33406 / DSM 1761 / CIP 103989 / NBRC 15051 / NCIMB 9469 / D465).